The following is a 237-amino-acid chain: Putative HTH-type transcriptional regulator ycf28 (237 aa).

An HTH crp-type domain is found at 155 to 228 (KSITNRLISL…KKKVIIHDPI (74 aa)). Positions 188–207 (HKVLAQIIGSNRVSITRIIS) form a DNA-binding region, H-T-H motif.

It localises to the plastid. It is found in the chloroplast. This is Putative HTH-type transcriptional regulator ycf28 (ycf28) from Porphyra purpurea (Red seaweed).